A 1755-amino-acid chain; its full sequence is Transposon Ty1-OR Gag-Pol polyprotein (1755 aa).

Polar residues-rich tracts occupy residues 1–10 (MESQQLSNYP), 48–60 (TKANSQQTTTPAS), and 127–152 (QSQFPQYPSSVGTPLSTPSPESGNTF). Disordered regions lie at residues 1–93 (MESQ…MMTQ), 126–173 (PQSQ…RPPP), and 352–421 (GSRN…SKST). Over residues 153-165 (TDSSSADSDMTST) the composition is skewed to low complexity. The RNA-binding stretch occupies residues 299–401 (NNGIHINNKV…NSKSKTARAH (103 aa)). The span at 402-418 (NVSTSNNSPSTDNDSIS) shows a compositional bias: low complexity. Ser416 carries the phosphoserine modification. Catalysis depends on Asp461, which acts as the For protease activity; shared with dimeric partner. Residues 583 to 640 (NVHTSESTRKYPYPFIHRMLAHANAQTIRYSLKNNTITYFNESDVDWSSAIDYQCPDC) are integrase-type zinc finger-like. An Integrase catalytic domain is found at 660-835 (NSYEPFQYLH…AGLDISTLLP (176 aa)). Mg(2+) is bound by residues Asp671 and Asp736. Disordered regions lie at residues 956-1087 (SKAV…ETEK), 1092-1111 (RSPSIDASPPENNSSHNIVP), and 1130-1187 (DLPL…DNET). Low complexity predominate over residues 960–969 (SPTDSTPPST). Over residues 1005–1015 (STPQISNIEST) the composition is skewed to polar residues. Basic and acidic residues predominate over residues 1038–1053 (ESSHASKSKDFRHSDS). Composition is skewed to polar residues over residues 1054 to 1082 (YSENETNHTNVPISSTGGTNNKTVPQISD) and 1101 to 1111 (PENNSSHNIVP). A Bipartite nuclear localization signal motif is present at residues 1178–1212 (KKRSLEDNETEIKVSRDTWNTKNMRSLEPPRSKKR). The Reverse transcriptase Ty1/copia-type domain occupies 1338–1476 (NNYYITQLDI…DILGLEIKYQ (139 aa)). Positions 1346, 1427, 1428, 1610, 1652, and 1685 each coordinate Mg(2+). The RNase H Ty1/copia-type domain occupies 1610–1752 (DASYGNQPYY…IKTFKLLTNK (143 aa)).

The capsid protein forms a homotrimer, from which the VLPs are assembled. The protease is a homodimer, whose active site consists of two apposed aspartic acid residues. Post-translationally, initially, virus-like particles (VLPs) are composed of the structural unprocessed proteins Gag and Gag-Pol, and also contain the host initiator methionine tRNA (tRNA(i)-Met) which serves as a primer for minus-strand DNA synthesis, and a dimer of genomic Ty RNA. Processing of the polyproteins occurs within the particle and proceeds by an ordered pathway, called maturation. First, the protease (PR) is released by autocatalytic cleavage of the Gag-Pol polyprotein yielding capsid protein p45 and a Pol-p154 precursor protein. This cleavage is a prerequisite for subsequent processing of Pol-p154 at the remaining sites to release the mature structural and catalytic proteins. Maturation takes place prior to the RT reaction and is required to produce transposition-competent VLPs.

It localises to the cytoplasm. The protein resides in the nucleus. The enzyme catalyses DNA(n) + a 2'-deoxyribonucleoside 5'-triphosphate = DNA(n+1) + diphosphate. It carries out the reaction Endonucleolytic cleavage to 5'-phosphomonoester.. Functionally, capsid protein (CA) is the structural component of the virus-like particle (VLP), forming the shell that encapsulates the retrotransposons dimeric RNA genome. The particles are assembled from trimer-clustered units and there are holes in the capsid shells that allow for the diffusion of macromolecules. CA also has nucleocapsid-like chaperone activity, promoting primer tRNA(i)-Met annealing to the multipartite primer-binding site (PBS), dimerization of Ty1 RNA and initiation of reverse transcription. The aspartyl protease (PR) mediates the proteolytic cleavages of the Gag and Gag-Pol polyproteins after assembly of the VLP. Its function is as follows. Reverse transcriptase/ribonuclease H (RT) is a multifunctional enzyme that catalyzes the conversion of the retro-elements RNA genome into dsDNA within the VLP. The enzyme displays a DNA polymerase activity that can copy either DNA or RNA templates, and a ribonuclease H (RNase H) activity that cleaves the RNA strand of RNA-DNA heteroduplexes during plus-strand synthesis and hydrolyzes RNA primers. The conversion leads to a linear dsDNA copy of the retrotransposon that includes long terminal repeats (LTRs) at both ends. In terms of biological role, integrase (IN) targets the VLP to the nucleus, where a subparticle preintegration complex (PIC) containing at least integrase and the newly synthesized dsDNA copy of the retrotransposon must transit the nuclear membrane. Once in the nucleus, integrase performs the integration of the dsDNA into the host genome. The sequence is that of Transposon Ty1-OR Gag-Pol polyprotein (TY1B-OR) from Saccharomyces cerevisiae (strain ATCC 204508 / S288c) (Baker's yeast).